The chain runs to 490 residues: 5'-3' exonuclease PLD3 (490 aa).

The Cytoplasmic portion of the chain corresponds to 1–38; sequence MKPKLMYQELKVPAEEPANELPMNEIEAWKAAEKKARW. A helical; Signal-anchor for type II membrane protein membrane pass occupies residues 39 to 59; that stretch reads VLLVLILAVVGFGALMTQLFL. Residues 60-490 are Lumenal-facing; that stretch reads WEYGDLHLFG…DSVGNACRLL (431 aa). 2 cysteine pairs are disulfide-bonded: C77/C239 and C81/C237. N97 and N132 each carry an N-linked (GlcNAc...) asparagine glycan. The region spanning 196-223 is the PLD phosphodiesterase 1 domain; it reads THGVLHTKFWVVDQTHFYLGSANMDWRS. Active-site residues include H201, K203, and D208. H201 acts as the Proton donor in catalysis. Residues H201 and K203 each contribute to the phosphate site. Position 218 (N218) interacts with phosphate. N-linked (GlcNAc...) asparagine glycans are attached at residues N236, N284, and N387. Residues C366 and C487 are joined by a disulfide bond. In terms of domain architecture, PLD phosphodiesterase 2 spans 411–437; it reads YARVNHNKYMVTERATYIGTSNWSGNY. Phosphate is bound at residue H416. H416 acts as the Nucleophile in catalysis. F438 lines the Mg(2+) pocket.

It belongs to the phospholipase D family. In terms of assembly, homodimer. Interacts with APP. In terms of processing, N-glycosylated. Post-translationally, proteolytically processed to a soluble active form that is stable within endosomes and lysosomes. During transport through the secretory pathway becomes proteolysed by cysteine proteases, thereby releasing a stable soluble lysosomal lumenal polypeptide, whereas the transmembrane-bound fragment is rapidly degraded. Its transport route to lysosomes involves ubiquitination and the ESCRT complex. Ubiquitinated at N-terminus. Ubiquitination mediates sorting into lysosomes. Widely expressed. In the brain, high levels of expression are detected in the frontal, temporal and occipital cortices and hippocampus. Expressed at low level in corpus callosum. Expressed in plasmacytoid dendritic cells and monocytes (at protein level).

It is found in the endoplasmic reticulum membrane. The protein resides in the lysosome lumen. The protein localises to the early endosome membrane. It localises to the late endosome membrane. Its subcellular location is the golgi apparatus membrane. It is found in the endosome membrane. The enzyme catalyses Exonucleolytic cleavage in the 5'- to 3'-direction to yield nucleoside 3'-phosphates.. It catalyses the reaction a 5'-end 5'-dephospho-ribonucleotidyl-ribonucleotide-RNA + H2O = a ribonucleoside 3'-phosphate + a 5'-end dephospho-ribonucleoside-RNA + H(+). It carries out the reaction a ribonucleoside 3'-phosphate-2'-3'-cyclophospho-GMP + H2O = a ribonucleoside 3'-phosphate + 2',3'-cyclophospho-GMP + H(+). The catalysed reaction is a 5'-end 5'-dephospho-2'-deoxyribonucleotidyl-2'-deoxyribonucleotide in single-stranded DNA + H2O = a 5'-end dephospho-2'-deoxyribonucleoside in single-stranded DNA + a 2'-deoxyribonucleoside 3'-phosphate + H(+). The enzyme catalyses a 5'-end 5'-phospho-2'-deoxyribonucleotide in single-stranded DNA + H2O = a 5'-end 5'-dephospho-2'-deoxyribonucleotide in single-stranded DNA + phosphate. It catalyses the reaction a 3-lyso-sn-glycero-1-phospho-(3'-acyl-1'-sn-glycerol) + a 1-acyl-sn-glycerol = a 3-acyl-sn-glycero-1-phospho-(3'-acyl-1'-sn-glycerol) + glycerol. It carries out the reaction 3-lyso-sn-glycero-1-phospho-(3'-(9Z-octadecenoyl)-1'-sn-glycerol) + 1-(9Z-octadecenoyl)-sn-glycerol = 3-(9Z-octadecenoyl)-sn-glycero-1-phospho-(3'-(9Z-octadecenoyl)-1'-sn-glycerol) + glycerol. Its activity is regulated as follows. The exonuclease activity toward ssDNA substrate is Ca(2+) and Mg(2+)-independent, but it is inhibited by Fe(2+), Cu(2+) and to a lesser extent Zn(2+) ions. Its function is as follows. 5'-&gt;3' exonuclease that hydrolyzes the phosphodiester bond of single-stranded DNA (ssDNA) and RNA molecules to form nucleoside 3'-monophosphates and 5'-end 5'-hydroxy deoxyribonucleotide/ribonucleotide fragments. Partially redundant with PLD4, can cleave all four nucleotides displaying higher efficiency for ssDNA and RNA fragments initiated with uridine and guanosine residues and lower efficiency for cytidine-initiated substrates. As a result, it does not always degrade polynucleotides to the single nucleotide level, it can stall at specific sites sparing certain fragments from exonucleolytic degradation. Processes self and pathogenic ssDNA and RNA molecules that reach the endolysosomal compartment via phagocytosis or autophagy and may serve as 'danger' signals for recognition by innate immune receptors such as toll-like receptors (TLRs). Degrades mitochondrial CpG-rich ssDNA fragments to prevent TLR9 activation and autoinflammatory response, but it can cleave viral RNA to generate ligands for TLR7 activation and initiate antiviral immune responses. In plasmacytoid dendritic cells, it cooperates with endonuclease RNASET2 to release 2',3'-cyclic guanosine monophosphate (2',3'-cGMP), a potent stimulatory ligand for TLR7. Produces 2',3'-cGMPs and cytidine-rich RNA fragments that occupy TLR7 ligand-binding pockets and trigger a signaling-competent state. Can exert polynucleotide phosphatase activity toward 5'-phosphorylated ssDNA substrates although at a slow rate. Transphosphatidylase that catalyzes the exchange with R to S stereo-inversion of the glycerol moiety between (S,R)-lysophosphatidylglycerol (LPG) and monoacylglycerol (MAG) substrates to yield (S,S)-bis(monoacylglycero)phosphate (BMP). Can synthesize a variety of (S,S)-BMPs representing the main phospholipid constituent of lysosomal intralumenal vesicle (ILV) membranes that bind acid hydrolases for lipid degradation. Regulates the homeostasis and interorganellar communication of the endolysosomal system with an overall impact on cellular removal of dysfunctional organelles via autophagy as well as proper protein and lipid turnover. May play a role in myotube formation in response to ER stress. The chain is 5'-3' exonuclease PLD3 from Homo sapiens (Human).